The chain runs to 203 residues: Akirin-2 (203 aa).

2 positions are modified to phosphoserine: Ser18 and Ser21. Residues 22–27 (PKRRRC) carry the Nuclear localization signal motif. Ser57 carries the post-translational modification Phosphoserine. Positions 200-203 (SYVS) match the SYVS motif motif.

The protein belongs to the akirin family. As to quaternary structure, homodimer. Interacts with IPO9; the interaction is direct. Associates with 20S and 26S proteasomes. Interacts with SMARCD1; promoting SWI/SNF complex recruitment. Interacts with NFKBIZ. Interacts with YWHAB. Polyubiquitinated. Polyubiquitination is dependent of UBR5 that extends pre-ubiquitinated AKIRIN2. Widely expressed. Most abundant in the lung, followed by the skeletal muscle, heart, liver, fat, thymus, lymph node, small intestine, kidney and spleen. In skeletal muscle, expressed at higher level in fast extensor digitorum longus (EDL) and longissimus lumborum (LL) muscles than in slow soleus (SOL) muscles.

The protein resides in the nucleus. It localises to the cytoplasm. It is found in the membrane. Its function is as follows. Molecular adapter that acts as a bridge between a variety of multiprotein complexes, and which is involved in embryonic development, immunity, myogenesis and brain development. Plays a key role in nuclear protein degradation by promoting import of proteasomes into the nucleus: directly binds to fully assembled 20S proteasomes at one end and to nuclear import receptor IPO9 at the other end, bridging them together and mediating the import of pre-assembled proteasome complexes through the nuclear pore. Involved in innate immunity by regulating the production of interleukin-6 (IL6) downstream of Toll-like receptor (TLR): acts by bridging the NF-kappa-B inhibitor NFKBIZ and the SWI/SNF complex, leading to promote induction of IL6. Also involved in adaptive immunity by promoting B-cell activation. Involved in brain development: required for the survival and proliferation of cerebral cortical progenitor cells. Involved in myogenesis: required for skeletal muscle formation and skeletal development, possibly by regulating expression of muscle differentiation factors. In Sus scrofa (Pig), this protein is Akirin-2.